A 142-amino-acid polypeptide reads, in one-letter code: Secreted acidic protein 1B (142 aa).

2 stretches are compositionally biased toward acidic residues: residues 1 to 47 (SDDE…DDNE) and 54 to 64 (TNDDVDYGDGN). The tract at residues 1–74 (SDDESGDDEN…DEAREIGDHS (74 aa)) is disordered. The Extracellular segment spans residues 1–123 (SDDESGDDEN…YLRSGGSHFK (123 aa)). Basic and acidic residues predominate over residues 65-74 (DEAREIGDHS). Residues 124–141 (GQLLNITLGLGFCILFLL) traverse the membrane as a helical segment. A topological domain (cytoplasmic) is located at residue Leu142.

Component of the acid-insoluble and acid-soluble organic matrix of the aragonitic skeleton (at protein level).

Its subcellular location is the membrane. The chain is Secreted acidic protein 1B from Acropora millepora (Staghorn coral).